Here is a 412-residue protein sequence, read N- to C-terminus: Multifunctional CCA protein (412 aa).

Residues glycine 8 and arginine 11 each contribute to the ATP site. Positions 8 and 11 each coordinate CTP. Mg(2+) contacts are provided by aspartate 21 and aspartate 23. Residues arginine 91, arginine 137, and arginine 140 each coordinate ATP. The CTP site is built by arginine 91, arginine 137, and arginine 140. The HD domain occupies 228–329; it reads TGIHTLMTLS…VKLFDSIDAW (102 aa).

Belongs to the tRNA nucleotidyltransferase/poly(A) polymerase family. Bacterial CCA-adding enzyme type 1 subfamily. Monomer. Can also form homodimers and oligomers. It depends on Mg(2+) as a cofactor. Ni(2+) is required as a cofactor.

The catalysed reaction is a tRNA precursor + 2 CTP + ATP = a tRNA with a 3' CCA end + 3 diphosphate. It carries out the reaction a tRNA with a 3' CCA end + 2 CTP + ATP = a tRNA with a 3' CCACCA end + 3 diphosphate. Catalyzes the addition and repair of the essential 3'-terminal CCA sequence in tRNAs without using a nucleic acid template. Adds these three nucleotides in the order of C, C, and A to the tRNA nucleotide-73, using CTP and ATP as substrates and producing inorganic pyrophosphate. tRNA 3'-terminal CCA addition is required both for tRNA processing and repair. Also involved in tRNA surveillance by mediating tandem CCA addition to generate a CCACCA at the 3' terminus of unstable tRNAs. While stable tRNAs receive only 3'-terminal CCA, unstable tRNAs are marked with CCACCA and rapidly degraded. The protein is Multifunctional CCA protein of Shigella dysenteriae serotype 1 (strain Sd197).